The following is a 545-amino-acid chain: 4-coumarate--CoA ligase 1 (545 aa).

Positions 192, 193, 194, 195, 196, and 200 each coordinate ATP. Residues Y242 and S246 each coordinate (E)-4-coumaroyl-AMP. A CoA-binding site is contributed by K263. The segment at D265 to Q334 is SBD1. (E)-4-coumaroyl-AMP-binding residues include A312, Q334, G335, T339, and M347. ATP is bound by residues Q334, G335, and T339. The segment at G335–Y402 is SBD2. ATP-binding residues include D423 and R438. 2 residues coordinate (E)-4-coumaroyl-AMP: K440 and K444. CoA-binding residues include K446 and G447. K529 serves as a coordination point for ATP.

Belongs to the ATP-dependent AMP-binding enzyme family. Requires Mg(2+) as cofactor.

It catalyses the reaction (E)-4-coumarate + ATP + CoA = (E)-4-coumaroyl-CoA + AMP + diphosphate. The enzyme catalyses (E)-4-coumarate + ATP + H(+) = (E)-4-coumaroyl-AMP + diphosphate. It carries out the reaction (E)-4-coumaroyl-AMP + CoA = (E)-4-coumaroyl-CoA + AMP + H(+). It participates in phytoalexin biosynthesis; 3,4',5-trihydroxystilbene biosynthesis; 3,4',5-trihydroxystilbene from trans-4-coumarate: step 1/2. In terms of biological role, carboxylate--CoA ligase that may use 4-coumarate as substrate. Follows a two-step reaction mechanism, wherein the carboxylate substrate first undergoes adenylation by ATP, followed by a thioesterification in the presence of CoA to yield the final CoA thioester. The sequence is that of 4-coumarate--CoA ligase 1 (4CL1) from Solanum tuberosum (Potato).